Here is a 378-residue protein sequence, read N- to C-terminus: MKSSKSDLFIYKTWFKLLVLYFVMFVLSATVPIAASFPGLGFPCYYNALVNYSAINLTERNVAKHLTPTLYLEEPEMFAYMTFTFLVDCFAAVYYFLGALAIMLAKRHFVVSLTTLSQWIAMVGTPTLILIGMWRMWTIQLFIQTLSYKHIYLSAFVYLIHFLLSFLHTQCYISRNSQLWSLKVLEQGIPPNTLLDTVVFTIKPLLANCQLFCLGLEMLVFSLSFMMAIGNSFYVLVSDIVFGAINLYLALVLFWVLLTELYLVKYMTFVMGFYLGGLIGCIFLLVPLWRYEQIFVAANLRSPILINILVIFFLCTLSALVRLLRMTWFSPTKPSYEPIQLKNIKHRRVKLQSPSGPSILEEGSSDEGSEDSEEEEEL.

The Intravirion portion of the chain corresponds to 1–16; that stretch reads MKSSKSDLFIYKTWFK. A helical transmembrane segment spans residues 17 to 37; the sequence is LLVLYFVMFVLSATVPIAASF. Over 38–84 the chain is Virion surface; that stretch reads PGLGFPCYYNALVNYSAINLTERNVAKHLTPTLYLEEPEMFAYMTFT. Residues 85–105 form a helical membrane-spanning segment; it reads FLVDCFAAVYYFLGALAIMLA. Topologically, residues 106-118 are intravirion; sequence KRHFVVSLTTLSQ. The chain crosses the membrane as a helical span at residues 119-139; it reads WIAMVGTPTLILIGMWRMWTI. Topologically, residues 140 to 150 are virion surface; it reads QLFIQTLSYKH. The helical transmembrane segment at 151–171 threads the bilayer; that stretch reads IYLSAFVYLIHFLLSFLHTQC. Residues 172–210 lie on the Intravirion side of the membrane; that stretch reads YISRNSQLWSLKVLEQGIPPNTLLDTVVFTIKPLLANCQ. Residues 211-231 traverse the membrane as a helical segment; it reads LFCLGLEMLVFSLSFMMAIGN. Topologically, residues 232–239 are virion surface; that stretch reads SFYVLVSD. Residues 240 to 260 traverse the membrane as a helical segment; the sequence is IVFGAINLYLALVLFWVLLTE. At 261-268 the chain is on the intravirion side; sequence LYLVKYMT. Residues 269–289 traverse the membrane as a helical segment; the sequence is FVMGFYLGGLIGCIFLLVPLW. The Virion surface portion of the chain corresponds to 290-303; that stretch reads RYEQIFVAANLRSP. A helical membrane pass occupies residues 304-324; the sequence is ILINILVIFFLCTLSALVRLL. Topologically, residues 325–378 are intravirion; the sequence is RMTWFSPTKPSYEPIQLKNIKHRRVKLQSPSGPSILEEGSSDEGSEDSEEEEEL. A disordered region spans residues 347–378; that stretch reads RRVKLQSPSGPSILEEGSSDEGSEDSEEEEEL. The span at 363 to 378 shows a compositional bias: acidic residues; that stretch reads GSSDEGSEDSEEEEEL.

The protein belongs to the herpesviridae glycoprotein M family. Interacts (via N-terminus) with gN (via N-terminus). The gM-gN heterodimer forms the gCII complex.

It localises to the virion membrane. The protein localises to the host Golgi apparatus. It is found in the host trans-Golgi network. Its subcellular location is the host endosome membrane. The protein resides in the host nucleus inner membrane. Its function is as follows. Envelope glycoprotein important for virion assembly and egress. Plays a role in the correct incorporation of gH-gL into virion membrane. Directs the glycoprotein N (gN) to the host trans-Golgi network. In Equus caballus (Horse), this protein is Envelope glycoprotein M.